We begin with the raw amino-acid sequence, 185 residues long: V-type proton ATPase subunit E (185 aa).

This sequence belongs to the V-ATPase E subunit family.

In terms of biological role, produces ATP from ADP in the presence of a proton gradient across the membrane. The chain is V-type proton ATPase subunit E from Deinococcus deserti (strain DSM 17065 / CIP 109153 / LMG 22923 / VCD115).